Reading from the N-terminus, the 74-residue chain is Small ribosomal subunit protein uS15 (74 aa).

The protein belongs to the universal ribosomal protein uS15 family. In terms of assembly, part of the 30S ribosomal subunit. Forms a bridge to the 50S subunit in the 70S ribosome, contacting the 23S rRNA.

Its function is as follows. One of the primary rRNA binding proteins, it binds directly to 16S rRNA where it helps nucleate assembly of the platform of the 30S subunit by binding and bridging several RNA helices of the 16S rRNA. In terms of biological role, forms an intersubunit bridge (bridge B4) with the 23S rRNA of the 50S subunit in the ribosome. The sequence is that of Small ribosomal subunit protein uS15 from Onion yellows phytoplasma (strain OY-M).